Reading from the N-terminus, the 546-residue chain is Metal transporter Nramp6.2 (546 aa).

Helical transmembrane passes span 50–70 (FLPY…PGNL), 83–103 (ELLW…SLAA), 128–150 (SLWL…GTAF), 154–176 (ILFH…LLLG), 187–207 (LLIS…LSYV), 233–253 (IALL…ALVL), 270–290 (YFLI…VSII), and 333–353 (IYAI…TYAG). Residue asparagine 371 is glycosylated (N-linked (GlcNAc...) asparagine). Transmembrane regions (helical) follow at residues 374–394 (TRCI…SSGA), 397–417 (LIII…IPLL), 433–453 (IYII…NVYY), and 473–493 (VIIG…IIYL).

It belongs to the NRAMP (TC 2.A.55) family.

The protein localises to the membrane. In terms of biological role, probable divalent metal transporter. The sequence is that of Metal transporter Nramp6.2 from Populus trichocarpa (Western balsam poplar).